A 172-amino-acid polypeptide reads, in one-letter code: NADH-quinone oxidoreductase subunit B (172 aa).

[4Fe-4S] cluster contacts are provided by cysteine 46, cysteine 47, cysteine 111, and cysteine 141.

It belongs to the complex I 20 kDa subunit family. As to quaternary structure, NDH-1 is composed of 14 different subunits. Subunits NuoB, C, D, E, F, and G constitute the peripheral sector of the complex. It depends on [4Fe-4S] cluster as a cofactor.

The protein localises to the cell membrane. The catalysed reaction is a quinone + NADH + 5 H(+)(in) = a quinol + NAD(+) + 4 H(+)(out). Its function is as follows. NDH-1 shuttles electrons from NADH, via FMN and iron-sulfur (Fe-S) centers, to quinones in the respiratory chain. The immediate electron acceptor for the enzyme in this species is believed to be a menaquinone. Couples the redox reaction to proton translocation (for every two electrons transferred, four hydrogen ions are translocated across the cytoplasmic membrane), and thus conserves the redox energy in a proton gradient. The protein is NADH-quinone oxidoreductase subunit B of Bacillus cytotoxicus (strain DSM 22905 / CIP 110041 / 391-98 / NVH 391-98).